We begin with the raw amino-acid sequence, 179 residues long: Large ribosomal subunit protein uL6 (179 aa).

This sequence belongs to the universal ribosomal protein uL6 family. As to quaternary structure, part of the 50S ribosomal subunit.

This protein binds to the 23S rRNA, and is important in its secondary structure. It is located near the subunit interface in the base of the L7/L12 stalk, and near the tRNA binding site of the peptidyltransferase center. This is Large ribosomal subunit protein uL6 from Bifidobacterium adolescentis (strain ATCC 15703 / DSM 20083 / NCTC 11814 / E194a).